A 210-amino-acid chain; its full sequence is Na(+)-translocating NADH-quinone reductase subunit D (210 aa).

6 helical membrane passes run 11–31 (ILAP…VCSA), 42–62 (FVMT…VSLI), 72–92 (IIVQ…VLKA), 103–123 (VFVG…AFAM), 131–151 (FIDG…VGFF), and 178–198 (NGLM…IWAI).

It belongs to the NqrDE/RnfAE family. As to quaternary structure, composed of six subunits; NqrA, NqrB, NqrC, NqrD, NqrE and NqrF.

It is found in the cell inner membrane. The catalysed reaction is a ubiquinone + n Na(+)(in) + NADH + H(+) = a ubiquinol + n Na(+)(out) + NAD(+). Functionally, NQR complex catalyzes the reduction of ubiquinone-1 to ubiquinol by two successive reactions, coupled with the transport of Na(+) ions from the cytoplasm to the periplasm. NqrA to NqrE are probably involved in the second step, the conversion of ubisemiquinone to ubiquinol. The sequence is that of Na(+)-translocating NADH-quinone reductase subunit D from Vibrio atlanticus (strain LGP32) (Vibrio splendidus (strain Mel32)).